The chain runs to 67 residues: Protein AaeX (67 aa).

Transmembrane regions (helical) follow at residues 10–30 (FGLS…LFFV) and 43–63 (FVWH…YLLF).

It belongs to the AaeX family.

Its subcellular location is the cell membrane. This is Protein AaeX from Pectobacterium atrosepticum (strain SCRI 1043 / ATCC BAA-672) (Erwinia carotovora subsp. atroseptica).